A 476-amino-acid chain; its full sequence is Doublesex- and mab-3-related transcription factor 3 (476 aa).

Positions 29-76 (CARCRNHGVLSWLKGHKRYCRFKDCTCEKCILIIERQRVMAAQVALRR) form a DNA-binding region, DM. Disordered regions lie at residues 89-130 (DSLR…RPTA) and 147-195 (GTLP…SKNC). Positions 102–121 (DAAATAATASQSSPASQASQ) are enriched in low complexity. The segment covering 165-174 (DSSSTDNTAE) has biased composition (polar residues). Positions 176 to 185 (FSDKDTDQRS) are enriched in basic and acidic residues. Positions 255 to 290 (RPPLEVLKKIFPNQKPTVLELILKGCGGDLVSAVEV) constitute a DMA domain. A compositionally biased stretch (polar residues) spans 418-432 (NSTSVFRSSPVLSSR). Residues 418-476 (NSTSVFRSSPVLSSRTTEDPRISIPDDGCPIVTKQSIYTEDDYDERSDSSDSRILNTSS) are disordered.

Belongs to the DMRT family. As to expression, expressed in the ventral spinal cord, in a restrical population of neurons migrating ventrically in the developing spinal cord at 11.5 dpc.

Its subcellular location is the nucleus. Functionally, probable transcription factor that plays a role in configuring the spinal circuits controlling stride in vertebrates. Involved in neuronal specification within specific subdivision of spinal cord neurons and in the development of a coordinated locomotor network controlling limb movements. May regulate transcription during sexual development. In Mus musculus (Mouse), this protein is Doublesex- and mab-3-related transcription factor 3 (Dmrt3).